The chain runs to 437 residues: Ribosomal protein uS12 methylthiotransferase RimO (437 aa).

Positions 4–114 (PRVSFVSLGC…VMAAVHEAAP (111 aa)) constitute an MTTase N-terminal domain. Residues Cys13, Cys49, Cys78, Cys145, Cys149, and Cys152 each coordinate [4Fe-4S] cluster. Residues 131 to 369 (LTPRHYAYLK…MQRQQKISAT (239 aa)) enclose the Radical SAM core domain. Residues 372 to 437 (AKKVGKRLPV…DAYDLYGSAV (66 aa)) enclose the TRAM domain.

This sequence belongs to the methylthiotransferase family. RimO subfamily. [4Fe-4S] cluster serves as cofactor.

The protein resides in the cytoplasm. It catalyses the reaction L-aspartate(89)-[ribosomal protein uS12]-hydrogen + (sulfur carrier)-SH + AH2 + 2 S-adenosyl-L-methionine = 3-methylsulfanyl-L-aspartate(89)-[ribosomal protein uS12]-hydrogen + (sulfur carrier)-H + 5'-deoxyadenosine + L-methionine + A + S-adenosyl-L-homocysteine + 2 H(+). In terms of biological role, catalyzes the methylthiolation of an aspartic acid residue of ribosomal protein uS12. In Mesorhizobium japonicum (strain LMG 29417 / CECT 9101 / MAFF 303099) (Mesorhizobium loti (strain MAFF 303099)), this protein is Ribosomal protein uS12 methylthiotransferase RimO.